The primary structure comprises 158 residues: Aspartate carbamoyltransferase regulatory chain (158 aa).

Residues C111, C116, C140, and C143 each coordinate Zn(2+).

Belongs to the PyrI family. Contains catalytic and regulatory chains. It depends on Zn(2+) as a cofactor.

Its function is as follows. Involved in allosteric regulation of aspartate carbamoyltransferase. This Metallosphaera sedula (strain ATCC 51363 / DSM 5348 / JCM 9185 / NBRC 15509 / TH2) protein is Aspartate carbamoyltransferase regulatory chain.